Consider the following 433-residue polypeptide: Nucleoprotein (433 aa).

The tract at residues Met1–Thr50 is rdRP binding. 2 homomultimerization regions span residues Met1–Thr79 and Asn100–Tyr125. Residues Met1–Asn100 are chaperone activity. Residues Met1 to Lys175 form a viral panhandle binding region. Residues Leu4–Arg71 are a coiled coil. Basic and acidic residues predominate over residues Val69–Pro78. The tract at residues Val69–Leu90 is disordered. The interaction with glycoprotein N stretch occupies residues Asp80–Lys248. The interaction with host RPS19 stretch occupies residues Lys150–Lys175. A viral RNA-binding region spans residues Lys175 to Ser217. The short motif at Tyr178–Met181 is the YxxL element. The interval Met188–Glu191 is interaction with host UBE2I/UBC9. Positions Gly377–Ile425 are homomultimerization. The segment at Gly377–Ile433 is interaction with host DAXX.

Belongs to the hantavirus nucleocapsid protein family. Homotrimer. Homomultimer. Homomultimerizes and binds to viral genomic RNA to form the nucleocapsid. Interacts with host MAP1LC3B; this interaction participates to the protection of Gn from virus-triggered autophagy. Interacts with host SNAP29; this interaction participates to the protection of glycoprotein N from virus-triggered autophagy. Interacts (via N-terminus) with host RPS19; this interaction probably mediates the loading of the 40S ribosomal subunit on viral capped mRNA during N-mediated translation initiation. Interacts with the viral RdRp. Interacts with host SUMO1 (via N-terminus). Interacts with host DAXX. Interacts with the viral glycoprotein N (via C-terminus). Interacts with the viral glycoprotein C (via C-terminus).

It is found in the virion. It localises to the host cytoplasm. The protein localises to the host perinuclear region. Its subcellular location is the host Golgi apparatus. The protein resides in the host cis-Golgi network. Functionally, encapsidates the genome protecting it from nucleases. The encapsidated genomic RNA is termed the nucleocapsid (NC) and serves as template for transcription and replication. The nucleocapsid has a left-handed helical structure. As a trimer, specifically binds and acts as a chaperone to unwind the panhandle structure formed by the viral RNA (vRNA) termini. Involved in the transcription and replication initiation of vRNA by mediating primer annealing. Plays a role in cap snatching by sequestering capped RNAs in P bodies for use by the viral RdRp during transcription initiation. Substitutes for the cellular cap-binding complex (eIF4F) to preferentially facilitate the translation of capped mRNAs. Initiates the translation by specifically binding to the cap and 40S ribosomal subunit. Prevents the viral glycoprotein N (Gn) from autophagy-dependent breakdown maybe by blocking autophagosome formation. Inhibits host EIF2AK2/PKR dimerization to prevent PKR-induced translational shutdown in cells and thus the activation of the antiviral state. Also displays sequence-unspecific DNA endonuclease activity. This chain is Nucleoprotein (N), found in Puumala virus (strain P360).